The following is a 182-amino-acid chain: Small ribosomal subunit protein uS5 (182 aa).

In terms of domain architecture, S5 DRBM spans 16–79 (FVDRLVHINR…ESAKRGMIYV (64 aa)).

It belongs to the universal ribosomal protein uS5 family. Part of the 30S ribosomal subunit. Contacts proteins S4 and S8.

With S4 and S12 plays an important role in translational accuracy. In terms of biological role, located at the back of the 30S subunit body where it stabilizes the conformation of the head with respect to the body. This chain is Small ribosomal subunit protein uS5, found in Bartonella henselae (strain ATCC 49882 / DSM 28221 / CCUG 30454 / Houston 1) (Rochalimaea henselae).